Reading from the N-terminus, the 306-residue chain is D-alanine--D-alanine ligase (306 aa).

An ATP-grasp domain is found at 107–300 (KEAYRAAGLP…FGQLCAWMVE (194 aa)). 134–184 (MQPPYVVKPYNEGSSVGVYIVTEAANGPPVLAPDLPATLMVEEYVPGRELS) serves as a coordination point for ATP. Mg(2+) contacts are provided by D251, E267, and N269.

It belongs to the D-alanine--D-alanine ligase family. The cofactor is Mg(2+). Requires Mn(2+) as cofactor.

It localises to the cytoplasm. The catalysed reaction is 2 D-alanine + ATP = D-alanyl-D-alanine + ADP + phosphate + H(+). Its pathway is cell wall biogenesis; peptidoglycan biosynthesis. In terms of biological role, cell wall formation. The sequence is that of D-alanine--D-alanine ligase from Ruegeria pomeroyi (strain ATCC 700808 / DSM 15171 / DSS-3) (Silicibacter pomeroyi).